A 178-amino-acid chain; its full sequence is Endothelin-2 (178 aa).

Residues 1 to 26 form the signal peptide; that stretch reads MVAMPTAWCSIALALLLALHEGKGQV. Positions 27 to 46 are excised as a propeptide; that stretch reads AAAPDQPAPSHRARASHLRP. 2 cysteine pairs are disulfide-bonded: C49-C63 and C51-C59. Positions 70-178 are excised as a propeptide; it reads VNTPGQTAPY…RPTHSRRWKR (109 aa). The interval 96–111 is endothelin-like; it reads CECSSGRDPACATFCH.

Belongs to the endothelin/sarafotoxin family.

It is found in the secreted. In terms of biological role, endothelins are endothelium-derived vasoconstrictor peptides. The protein is Endothelin-2 (EDN2) of Felis catus (Cat).